The chain runs to 545 residues: SLAIN motif-containing protein 1 (545 aa).

The stretch at 14–53 (TTNGLVANAELEVKKLQELVRKLEKQNEQLRNRASAVSNC) forms a coiled coil. 2 stretches are compositionally biased toward low complexity: residues 268 to 286 (TTST…SLYS) and 466 to 481 (IPSS…SGIP). Disordered regions lie at residues 268–342 (TTST…IRDC) and 461–526 (QGGS…LQPP). Polar residues predominate over residues 503–522 (STANGSSIPRSKIAQPQRSF).

This sequence belongs to the SLAIN motif-containing family.

It is found in the cytoplasm. The protein resides in the cytoskeleton. Microtubule plus-end tracking protein that might be involved in the regulation of cytoplasmic microtubule dynamics, microtubule organization and microtubule elongation. In Xenopus tropicalis (Western clawed frog), this protein is SLAIN motif-containing protein 1 (slain1).